Here is an 80-residue protein sequence, read N- to C-terminus: Cell division protein ZapB (80 aa).

Positions Phe-3–Glu-80 form a coiled coil.

Belongs to the ZapB family. In terms of assembly, homodimer. The ends of the coiled-coil dimer bind to each other, forming polymers. Interacts with FtsZ.

Its subcellular location is the cytoplasm. In terms of biological role, non-essential, abundant cell division factor that is required for proper Z-ring formation. It is recruited early to the divisome by direct interaction with FtsZ, stimulating Z-ring assembly and thereby promoting cell division earlier in the cell cycle. Its recruitment to the Z-ring requires functional FtsA or ZipA. The protein is Cell division protein ZapB of Vibrio parahaemolyticus serotype O3:K6 (strain RIMD 2210633).